We begin with the raw amino-acid sequence, 150 residues long: UPF0039 protein C11D3.02c (150 aa).

The region spanning lysine 9–leucine 150 is the N-acetyltransferase domain.

The protein belongs to the UPF0039 (ElaA) family.

The chain is UPF0039 protein C11D3.02c from Schizosaccharomyces pombe (strain 972 / ATCC 24843) (Fission yeast).